The chain runs to 1375 residues: Ubiquitin carboxyl-terminal hydrolase 47 (1375 aa).

K122 is subject to N6-acetyllysine. The 377-residue stretch at 188 to 564 (VGLVNQAMTC…NAYMLIYRLK (377 aa)) folds into the USP domain. The active-site Nucleophile is the C197. The segment at 425–452 (DEKSPQTESCTDSGAENEGSCHSDQMSN) is disordered. A compositionally biased stretch (polar residues) spans 430-452 (QTESCTDSGAENEGSCHSDQMSN). The active-site Proton acceptor is H503. A Phosphoserine modification is found at S832. Disordered stretches follow at residues 840-859 (TAYQ…CERV), 880-968 (LKSL…SHSS), and 983-1024 (NGLD…ESGK). Low complexity predominate over residues 882-899 (SLSLQQQQDGDNGDSSKS). S910 is subject to Phosphoserine. Residues 912-928 (LNERDSSASVDNRELEQ) are compositionally biased toward basic and acidic residues. Residues 929–938 (HIQTSDPENF) are compositionally biased toward polar residues. Phosphoserine is present on S933. Basic and acidic residues predominate over residues 940-950 (SEERSDSDVNN). Residues 953-968 (STSSVDSDILSSSHSS) are compositionally biased toward low complexity. Over residues 997-1006 (KANEGKKETW) the composition is skewed to basic and acidic residues. Over residues 1007 to 1020 (DTAEEDSGTDSEYD) the composition is skewed to acidic residues. Phosphoserine is present on S1013. Phosphothreonine is present on T1015. Residue S1017 is modified to Phosphoserine.

This sequence belongs to the peptidase C19 family. As to quaternary structure, interacts with BTRC and FBXW11. Interacts with POLB. In terms of tissue distribution, expressed in skeletal muscle, heart and testis.

It localises to the cytoplasm. It carries out the reaction Thiol-dependent hydrolysis of ester, thioester, amide, peptide and isopeptide bonds formed by the C-terminal Gly of ubiquitin (a 76-residue protein attached to proteins as an intracellular targeting signal).. Ubiquitin-specific protease that specifically deubiquitinates monoubiquitinated DNA polymerase beta (POLB), stabilizing POLB thereby playing a role in base-excision repair (BER). Acts as a regulator of cell growth and genome integrity. May also indirectly regulate CDC25A expression at a transcriptional level. The polypeptide is Ubiquitin carboxyl-terminal hydrolase 47 (USP47) (Homo sapiens (Human)).